Reading from the N-terminus, the 110-residue chain is Large ribosomal subunit protein uL24 (110 aa).

It belongs to the universal ribosomal protein uL24 family. As to quaternary structure, part of the 50S ribosomal subunit.

Its function is as follows. One of two assembly initiator proteins, it binds directly to the 5'-end of the 23S rRNA, where it nucleates assembly of the 50S subunit. Functionally, one of the proteins that surrounds the polypeptide exit tunnel on the outside of the subunit. The protein is Large ribosomal subunit protein uL24 of Caldicellulosiruptor saccharolyticus (strain ATCC 43494 / DSM 8903 / Tp8T 6331).